A 318-amino-acid chain; its full sequence is Cell growth regulator with EF hand domain protein 1 (318 aa).

The first 19 residues, 1–19, serve as a signal peptide directing secretion; the sequence is MLPLTMTVLILLLLPTGQA. 2 consecutive EF-hand domains span residues 69 to 104 and 114 to 149; these read SREQ…ALAP and PVIL…ALRH. Ca(2+) contacts are provided by Asp-82, Asp-84, Ser-86, Gln-88, Glu-93, Asp-127, Asn-129, Asp-131, and Glu-138. The interval 177 to 318 is disordered; that stretch reads LRQETQEAPG…HIVQVENDEI (142 aa). Basic and acidic residues-rich tracts occupy residues 186 to 202 and 223 to 233; these read GPRE…RESL and GEAEGQAEAKG. Repeat copies occupy residues 219-235, 236-252, and 253-269. Positions 219–286 are 4 X 17 AA approximate tandem repeats of P-G-P-R-G-E-A-G-G-Q-A-E-A-[KR]-G-D-A; sequence PGPRGEAEGQ…GGQAEARENG (68 aa). Over residues 235 to 272 the composition is skewed to low complexity; sequence APGPRGEAGGQAEAEGDAPGPRGEAGGQAEAEGDAPGP. The stretch at 270–286 is one 4; approximate repeat; the sequence is PGPRGEAGGQAEARENG. Residues 281–293 show a composition bias toward basic and acidic residues; sequence EARENGEEAKELP.

Probably digested extracellularly by an unknown serine protease generating extremely hydrophobic bioactive peptides.

It localises to the secreted. Functionally, mediates cell-cell adhesion in a calcium-dependent manner. Able to inhibit growth in several cell lines. This Homo sapiens (Human) protein is Cell growth regulator with EF hand domain protein 1.